The chain runs to 33 residues: Dermaseptin DS VIII-like peptide (33 aa).

Residue Ala33 is modified to Alanine amide.

In terms of tissue distribution, expressed by the parotoid glands.

The protein localises to the secreted. Functionally, possesses a potent antimicrobial activity against bacteria, fungi and protozoa. Probably acts by disturbing membrane functions with its amphipathic structure. The sequence is that of Dermaseptin DS VIII-like peptide from Phyllomedusa burmeisteri (Brazilian common walking leaf frog).